Reading from the N-terminus, the 186-residue chain is MSVADTKKSAEQKMQKSIEAFKADLAKIRTGRAHTGLLDHVQVDYYGSMVPISQVAAIGLADARTITVQPWEKKMVSAVEKAIRDCDLGLNPATMGEVIRVPMPALTEERRKELTKVVKGEAEGAKVAVRNLRRDANEQFKKLVKDKTISEDEERRGQDEVQKLTDKYVAEIDRMVAEKEKEIMTV.

The protein belongs to the RRF family.

It localises to the cytoplasm. Functionally, responsible for the release of ribosomes from messenger RNA at the termination of protein biosynthesis. May increase the efficiency of translation by recycling ribosomes from one round of translation to another. In Cupriavidus taiwanensis (strain DSM 17343 / BCRC 17206 / CCUG 44338 / CIP 107171 / LMG 19424 / R1) (Ralstonia taiwanensis (strain LMG 19424)), this protein is Ribosome-recycling factor.